The chain runs to 337 residues: Membrane-spanning 4-domains subfamily A member 18 (337 aa).

The segment at 101–121 is disordered; it reads LGTTDLQTQPGGPQNPPTCAP. 4 helical membrane passes run 155-175, 183-203, 220-240, and 252-272; these read LGAI…NPSL, AISG…SLSV, MNVV…VDLI, and GGLL…SHFG.

It belongs to the MS4A family.

The protein localises to the membrane. This is Membrane-spanning 4-domains subfamily A member 18 (MS4A18) from Bos taurus (Bovine).